The primary structure comprises 488 residues: UDP-N-acetylmuramoyl-L-alanyl-D-glutamate--2,6-diaminopimelate ligase (488 aa).

UDP-N-acetyl-alpha-D-muramoyl-L-alanyl-D-glutamate is bound by residues Leu24, Ser26, and 41–43; that span reads HQV. An ATP-binding site is contributed by 113-119; sequence GTNGKTT. UDP-N-acetyl-alpha-D-muramoyl-L-alanyl-D-glutamate is bound by residues Asn154, 155–156, Ser182, Gln188, and Arg190; that span reads TT. The residue at position 222 (Lys222) is an N6-carboxylysine. Residues Arg386, 410-413, Gly461, and Glu465 contribute to the meso-2,6-diaminopimelate site; that span reads DNPR. The Meso-diaminopimelate recognition motif signature appears at 410–413; sequence DNPR.

Belongs to the MurCDEF family. MurE subfamily. The cofactor is Mg(2+). Carboxylation is probably crucial for Mg(2+) binding and, consequently, for the gamma-phosphate positioning of ATP.

It is found in the cytoplasm. The catalysed reaction is UDP-N-acetyl-alpha-D-muramoyl-L-alanyl-D-glutamate + meso-2,6-diaminopimelate + ATP = UDP-N-acetyl-alpha-D-muramoyl-L-alanyl-gamma-D-glutamyl-meso-2,6-diaminopimelate + ADP + phosphate + H(+). It participates in cell wall biogenesis; peptidoglycan biosynthesis. Functionally, catalyzes the addition of meso-diaminopimelic acid to the nucleotide precursor UDP-N-acetylmuramoyl-L-alanyl-D-glutamate (UMAG) in the biosynthesis of bacterial cell-wall peptidoglycan. This is UDP-N-acetylmuramoyl-L-alanyl-D-glutamate--2,6-diaminopimelate ligase from Haemophilus influenzae (strain 86-028NP).